We begin with the raw amino-acid sequence, 222 residues long: Small ribosomal subunit protein uS7m (222 aa).

The transit peptide at 1–14 directs the protein to the mitochondrion; the sequence is MSKKLANFAQKRWI.

This sequence belongs to the universal ribosomal protein uS7 family. As to quaternary structure, component of the mitochondrial ribosome small subunit (28S) which comprises a 12S rRNA and about 30 distinct proteins.

Its subcellular location is the mitochondrion. This Caenorhabditis briggsae protein is Small ribosomal subunit protein uS7m (mrps-7).